The chain runs to 154 residues: Putative F-box protein At2g11200 (154 aa).

One can recognise an F-box domain in the interval 5-51 (TTAMSDLPRDLEEEVLSRVQLASLRAVRTTCKKWNRRLSKYRFTKKY).

This is Putative F-box protein At2g11200 from Arabidopsis thaliana (Mouse-ear cress).